Reading from the N-terminus, the 77-residue chain is Defensin-B6 (77 aa).

The N-terminal stretch at 1 to 20 is a signal peptide; that stretch reads MKTLFFLSVFIFLLLHLSPG. 3 cysteine pairs are disulfide-bonded: Cys-43–Cys-70, Cys-50–Cys-64, and Cys-54–Cys-71.

It belongs to the beta-defensin family. As to expression, lowly expressed in spleen, kidney and lung.

The protein localises to the secreted. Has antimicrobial activity. The polypeptide is Defensin-B6 (Ornithorhynchus anatinus (Duckbill platypus)).